Consider the following 67-residue polypeptide: Ferredoxin (67 aa).

2 consecutive 4Fe-4S ferredoxin-type domains span residues 3 to 31 (WKVS…MNDE) and 36 to 67 (PKVE…IEEA). Residues Cys-12, Asp-15, and Cys-18 each coordinate [4Fe-4S] cluster. A disulfide bridge links Cys-22 with Cys-49. [4Fe-4S] cluster is bound at residue Cys-57.

Homodimer. [4Fe-4S] cluster is required as a cofactor. [3Fe-4S] cluster serves as cofactor.

In terms of biological role, ferredoxins are iron-sulfur proteins that transfer electrons in a wide variety of metabolic reactions. This Pyrococcus furiosus (strain ATCC 43587 / DSM 3638 / JCM 8422 / Vc1) protein is Ferredoxin (fdxA).